A 46-amino-acid polypeptide reads, in one-letter code: Bottromycin D (46 aa).

A propeptide spanning residues 10 to 46 is cleaved from the precursor; sequence MTADFLNDDPNNAELSSLEMEELESWGAWSDDTDQSV.

The precursor peptide is first ribosomally synthesized and then highly tailored by specific enzymes to yield the final natural product. These modifications include several methylations, cyclization and the formation of t-Leu and Thia-beta-Ala residues.

It localises to the secreted. In terms of biological role, bottromycin D is a ribosomally synthesized and post-translationally modified peptide (RiPP) that displays antibiotic activity against methicillin-resistant S.aureus (MRSA). The protein is Bottromycin D of Streptomyces sp.